Here is a 231-residue protein sequence, read N- to C-terminus: Putative N-acetylmannosamine-6-phosphate 2-epimerase (231 aa).

It belongs to the NanE family.

The catalysed reaction is an N-acyl-D-glucosamine 6-phosphate = an N-acyl-D-mannosamine 6-phosphate. It participates in amino-sugar metabolism; N-acetylneuraminate degradation; D-fructose 6-phosphate from N-acetylneuraminate: step 3/5. In terms of biological role, converts N-acetylmannosamine-6-phosphate (ManNAc-6-P) to N-acetylglucosamine-6-phosphate (GlcNAc-6-P). The chain is Putative N-acetylmannosamine-6-phosphate 2-epimerase from Glaesserella parasuis serovar 5 (strain SH0165) (Haemophilus parasuis).